We begin with the raw amino-acid sequence, 1487 residues long: Probable lysine-specific demethylase SE14 (1487 aa).

The disordered stretch occupies residues 1–23; it reads MPPQPPPAASASASAPDPAVPAW. The span at 9–22 shows a compositional bias: low complexity; it reads ASASASAPDPAVPA. In terms of domain architecture, JmjN spans 30–71; that stretch reads APEYRPTESEFADPIAFLSRVEREAAAYGICKVIPPHPRPSR. The segment covering 86–104 has biased composition (low complexity); that stretch reads CDAPAPSPAAASDSSIPPS. The tract at residues 86-113 is disordered; it reads CDAPAPSPAAASDSSIPPSSSSPPPVSA. The region spanning 232–398 is the JmjC domain; that stretch reads NSPWNLQAIA…FAKEAAVRRA (167 aa). Residues His275, Glu277, and His366 each coordinate Fe cation. Disordered stretches follow at residues 494 to 555 and 684 to 718; these read SCSK…DDGD and YGDT…PDVE. 2 stretches are compositionally biased toward basic and acidic residues: residues 498–507 and 542–551; these read APEKKGEDGP and QAPEGEKLDT. The C2H2-type 1; degenerate zinc-finger motif lies at 1377–1400; it reads FQCDIEFCDMTFETKAELRAHQRN. 3 consecutive C2H2-type zinc fingers follow at residues 1400–1424, 1430–1454, and 1460–1486; these read NICT…QCVH, FKCP…IRVH, and YKCS…KFNH.

It depends on Fe(2+) as a cofactor.

The protein localises to the nucleus. Histone demethylase that demethylates 'Lys-4' (H3K4me) of histone H3. Involved in the control of flowering time. Has a suppressive effect on floral transition under long day conditions through the demethylation of H3K4me3 in the promoter region of the flower-promoting signal HD3B/RFT1. The polypeptide is Probable lysine-specific demethylase SE14 (SE14) (Oryza sativa subsp. japonica (Rice)).